The following is an 862-amino-acid chain: Taxadiene synthase (862 aa).

Residues 45–66 form a disordered region; sequence RVKMSRGSGGPGPVVMMSSSTG. Positions 613, 617, 757, 761, and 765 each coordinate Mg(2+). The short motif at 613–617 is the DDXXD motif element; it reads DDMAD.

Belongs to the terpene synthase family. The cofactor is Mg(2+).

It carries out the reaction (2E,6E,10E)-geranylgeranyl diphosphate = taxa-4(5),11(12)-diene + diphosphate. It participates in alkaloid biosynthesis; taxol biosynthesis; taxa-4(20),11-dien-5alpha-ol from geranylgeranyl diphosphate: step 1/2. Catalyzes the cyclization of the ubiquitous isoprenoid intermediate geranylgeranyl diphosphate to taxa-4,11-diene, the parent olefin with a taxane skeleton. This chain is Taxadiene synthase (TDC1), found in Taxus chinensis (Chinese yew).